A 295-amino-acid chain; its full sequence is Ribosomal RNA small subunit methyltransferase A (295 aa).

6 residues coordinate S-adenosyl-L-methionine: Asn29, Leu31, Gly56, Glu77, Asp102, and Asn128.

Belongs to the class I-like SAM-binding methyltransferase superfamily. rRNA adenine N(6)-methyltransferase family. RsmA subfamily.

The protein localises to the cytoplasm. The enzyme catalyses adenosine(1518)/adenosine(1519) in 16S rRNA + 4 S-adenosyl-L-methionine = N(6)-dimethyladenosine(1518)/N(6)-dimethyladenosine(1519) in 16S rRNA + 4 S-adenosyl-L-homocysteine + 4 H(+). In terms of biological role, specifically dimethylates two adjacent adenosines (A1518 and A1519) in the loop of a conserved hairpin near the 3'-end of 16S rRNA in the 30S particle. May play a critical role in biogenesis of 30S subunits. This Listeria innocua serovar 6a (strain ATCC BAA-680 / CLIP 11262) protein is Ribosomal RNA small subunit methyltransferase A.